The chain runs to 466 residues: Methylenetetrahydrofolate--tRNA-(uracil-5-)-methyltransferase TrmFO (466 aa).

10-15 (GGGLAG) lines the FAD pocket.

Belongs to the MnmG family. TrmFO subfamily. FAD is required as a cofactor.

Its subcellular location is the cytoplasm. The catalysed reaction is uridine(54) in tRNA + (6R)-5,10-methylene-5,6,7,8-tetrahydrofolate + NADH + H(+) = 5-methyluridine(54) in tRNA + (6S)-5,6,7,8-tetrahydrofolate + NAD(+). It carries out the reaction uridine(54) in tRNA + (6R)-5,10-methylene-5,6,7,8-tetrahydrofolate + NADPH + H(+) = 5-methyluridine(54) in tRNA + (6S)-5,6,7,8-tetrahydrofolate + NADP(+). Catalyzes the folate-dependent formation of 5-methyl-uridine at position 54 (M-5-U54) in all tRNAs. The protein is Methylenetetrahydrofolate--tRNA-(uracil-5-)-methyltransferase TrmFO of Phenylobacterium zucineum (strain HLK1).